Here is a 217-residue protein sequence, read N- to C-terminus: MKKLNNIIMILIMHRYFLRVMNLRQKVIEALEEGKSVAIKYQDVRDYLDLKTGHRVIFLEHINPAKETAAEILADLGNLAKSTIYSKYTTNEIVRDIKKRSKNRNVLLVFNDFQLLSKNTARVLLDLMEDVQVLCSIRGRPQKGQGRLLKRMTILSDRSDEVTDIKIPLIVFASFIAILTFVKAGSAIYNRNHFDFYLFSAAIFVGISVGRTLLWIS.

This is an uncharacterized protein from Methanothermobacter thermautotrophicus (Methanobacterium thermoformicicum).